Reading from the N-terminus, the 334-residue chain is Biotin synthase (334 aa).

The 220-residue stretch at Thr-41–Arg-260 folds into the Radical SAM core domain. [4Fe-4S] cluster-binding residues include Cys-56, Cys-60, and Cys-63. Cys-100, Cys-131, Cys-191, and Arg-264 together coordinate [2Fe-2S] cluster.

This sequence belongs to the radical SAM superfamily. Biotin synthase family. In terms of assembly, homodimer. [4Fe-4S] cluster is required as a cofactor. The cofactor is [2Fe-2S] cluster.

The enzyme catalyses (4R,5S)-dethiobiotin + (sulfur carrier)-SH + 2 reduced [2Fe-2S]-[ferredoxin] + 2 S-adenosyl-L-methionine = (sulfur carrier)-H + biotin + 2 5'-deoxyadenosine + 2 L-methionine + 2 oxidized [2Fe-2S]-[ferredoxin]. Its pathway is cofactor biosynthesis; biotin biosynthesis; biotin from 7,8-diaminononanoate: step 2/2. Catalyzes the conversion of dethiobiotin (DTB) to biotin by the insertion of a sulfur atom into dethiobiotin via a radical-based mechanism. This is Biotin synthase from Bradyrhizobium sp. (strain ORS 278).